We begin with the raw amino-acid sequence, 282 residues long: uncharacterized protein (282 aa).

Belongs to the ycf80 family.

Its subcellular location is the plastid. The protein localises to the chloroplast. This is an uncharacterized protein from Guillardia theta (Cryptophyte).